Here is a 249-residue protein sequence, read N- to C-terminus: Small ribosomal subunit protein uS3 (249 aa).

The KH type-2 domain maps to 23–94 (LNEFFTRELS…TVELYAEKVQ (72 aa)). 4 positions are modified to phosphoserine: S32, S37, S106, and S141.

The protein belongs to the universal ribosomal protein uS3 family. In terms of assembly, component of the small ribosomal subunit (SSU). Mature yeast ribosomes consist of a small (40S) and a large (60S) subunit. The 40S small subunit contains 1 molecule of ribosomal RNA (18S rRNA) and at least 33 different proteins. The large 60S subunit contains 3 rRNA molecules (25S, 5.8S and 5S rRNA) and at least 46 different proteins.

Its subcellular location is the cytoplasm. Functionally, component of the ribosome, a large ribonucleoprotein complex responsible for the synthesis of proteins in the cell. The small ribosomal subunit (SSU) binds messenger RNAs (mRNAs) and translates the encoded message by selecting cognate aminoacyl-transfer RNA (tRNA) molecules. The large subunit (LSU) contains the ribosomal catalytic site termed the peptidyl transferase center (PTC), which catalyzes the formation of peptide bonds, thereby polymerizing the amino acids delivered by tRNAs into a polypeptide chain. The nascent polypeptides leave the ribosome through a tunnel in the LSU and interact with protein factors that function in enzymatic processing, targeting, and the membrane insertion of nascent chains at the exit of the ribosomal tunnel. This is Small ribosomal subunit protein uS3 (rps3) from Schizosaccharomyces pombe (strain 972 / ATCC 24843) (Fission yeast).